Reading from the N-terminus, the 299-residue chain is MKLLMLCREPRLYSCQRLKESAEDNGHQIDILDPNRCLLKLSKNAPHFELYYQVNSKSEPYLLPDYDAIIPRFGSTSTRMGCAVLRHFRTKNIFCLNDDVAFLKARDKWLSLQLLTEQGIAVPNSALSGAEFSATQAILQIQSPTILKTLHGSQGIGVILAENRKSAVSIMETLTQADVPLLMQDFIQEAQGTDIRCFVIGDKVVATMQRIGQEDEFRANFHRGGSAEKIQLTEQEKVLALKATKCLGLDVAGVDLIRSKQGLLVLEVNASPGLEMIEKTSGIDIALQMIVHIEKQFKR.

The region spanning 112 to 294 (LQLLTEQGIA…IALQMIVHIE (183 aa)) is the ATP-grasp domain. ATP contacts are provided by residues lysine 148, 185–186 (DF), aspartate 194, and 218–220 (RAN). Positions 255, 267, and 269 each coordinate Mg(2+). Mn(2+)-binding residues include aspartate 255, glutamate 267, and asparagine 269.

This sequence belongs to the RimK family. Requires Mg(2+) as cofactor. Mn(2+) is required as a cofactor.

The polypeptide is Probable alpha-L-glutamate ligase (Histophilus somni (strain 129Pt) (Haemophilus somnus)).